A 329-amino-acid polypeptide reads, in one-letter code: Glucosyl-3-phosphoglycerate synthase (329 aa).

UDP-alpha-D-glucose is bound by residues proline 55–glutamate 59, serine 86, lysine 119, and aspartate 139–aspartate 141. Residue aspartate 141 participates in Mn(2+) binding. Glycine 189–threonine 192 serves as a coordination point for (2R)-3-phosphoglycerate. Tyrosine 234–glutamate 237 lines the UDP-alpha-D-glucose pocket. Histidine 263 provides a ligand contact to Mn(2+). Asparagine 265 contacts (2R)-3-phosphoglycerate.

It belongs to the glycosyltransferase 2 family. As to quaternary structure, homodimer. It depends on Mg(2+) as a cofactor. Mn(2+) is required as a cofactor.

It catalyses the reaction an NDP-alpha-D-glucose + (2R)-3-phosphoglycerate = (2R)-2-O-(alpha-D-glucopyranosyl)-3-phospho-glycerate + a ribonucleoside 5'-diphosphate + H(+). It carries out the reaction (2R)-3-phosphoglycerate + UDP-alpha-D-glucose = (2R)-2-O-(alpha-D-glucopyranosyl)-3-phospho-glycerate + UDP + H(+). The catalysed reaction is GDP-D-glucose + (2R)-3-phosphoglycerate = (2R)-2-O-(alpha-D-glucopyranosyl)-3-phospho-glycerate + GDP + H(+). Functionally, involved in the biosynthesis of 6-O-methylglucose lipopolysaccarides (MGLPs). Catalyzes the transfer of the glucose moiety from UDP-alpha-D-glucose (UDP-Glc) to the position 2 of 3-phospho-D-glycerate (3-PGA) to form glucosyl-3-phosphoglycerate (GPG). To a lesser extent can also use GDP-Glc but not UDP-Gal or UDP-GlcNAc as the sugar donor. The protein is Glucosyl-3-phosphoglycerate synthase of Mycolicibacterium paratuberculosis (strain ATCC BAA-968 / K-10) (Mycobacterium paratuberculosis).